The following is a 389-amino-acid chain: D(-)-tartrate dehydratase (389 aa).

Residues asparagine 21, asparagine 55, lysine 102, tyrosine 156, lysine 182, 182-184, 213-215, glutamate 239, glutamate 265, histidine 322, and 341-343 each bind substrate; these read KMK, DAN, and ESY. Lysine 184 functions as the acceptor in the catalytic mechanism. Residues aspartate 213, glutamate 239, and glutamate 265 each contribute to the Mg(2+) site. Histidine 322 acts as the Proton donor/acceptor in catalysis.

It belongs to the mandelate racemase/muconate lactonizing enzyme family. Homooctamer; tetramer of dimers. Requires Mg(2+) as cofactor.

It carries out the reaction (S,S)-tartrate = oxaloacetate + H2O. Functionally, catalyzes the dehydration of D-tartrate to oxaloacetate. The protein is D(-)-tartrate dehydratase (tarD) of Bradyrhizobium diazoefficiens (strain JCM 10833 / BCRC 13528 / IAM 13628 / NBRC 14792 / USDA 110).